A 461-amino-acid polypeptide reads, in one-letter code: Coronin-1A (461 aa).

Serine 2 bears the N-acetylserine mark. At serine 2 the chain carries Phosphoserine; by PKC. WD repeat units lie at residues 13-63 (HVFG…LVLP), 73-110 (NVPLVCGHTAPVLDIAWCPHNDNVIASGSEDCTVMVWE), 123-160 (PVVTLEGHTKRVGIVAWHPTAQNVLLSAGCDNVILVWD), 164-204 (GAAV…RVIE), 207-251 (KGTV…ALWD), 258-296 (PLSLQELDTSSGVLLPFFDPDTNIVYLCGKGDSSIRYFE), and 302-349 (PFLH…EPIA). A compositionally biased stretch (basic and acidic residues) spans 407–418 (NRGLDSARRRAT). Residues 407 to 431 (NRGLDSARRRATPEPSSTLSSDTVS) form a disordered region. Serine 412 carries the post-translational modification Phosphoserine; by PKC. Threonine 418 is modified (phosphothreonine). A compositionally biased stretch (polar residues) spans 420 to 430 (EPSSTLSSDTV). Serine 422 carries the post-translational modification Phosphoserine. Positions 425-461 (LSSDTVSRLEEDVRNLNAIVQKLQERLDRLEETVQAK) form a coiled coil.

Belongs to the WD repeat coronin family. As to quaternary structure, binds actin. Phosphorylation at Ser-412 by PKC strongly down-regulates the association with actin. Post-translationally, polyubiquitinated by RNF128 with 'Lys-48'-linked chains, leading to proteasomal degradation.

The protein localises to the cytoplasm. Its subcellular location is the cytoskeleton. It localises to the cell cortex. It is found in the cytoplasmic vesicle. The protein resides in the phagosome membrane. Its function is as follows. May be a crucial component of the cytoskeleton of highly motile cells, functioning both in the invagination of large pieces of plasma membrane, as well as in forming protrusions of the plasma membrane involved in cell locomotion. The polypeptide is Coronin-1A (Coro1a) (Rattus norvegicus (Rat)).